The chain runs to 354 residues: ATP-dependent (S)-NAD(P)H-hydrate dehydratase (354 aa).

Positions 42–350 constitute a YjeF C-terminal domain; it reads AENILRAITP…ECLGRSLEDI (309 aa). Residues glycine 155 and 208-214 each bind (6S)-NADPHX; that span reads NVNEYKR. ATP contacts are provided by residues 248 to 252 and 267 to 276; these read KGKSD and GSPRRCGGQG. Aspartate 277 serves as a coordination point for (6S)-NADPHX.

It belongs to the NnrD/CARKD family. The cofactor is Mg(2+).

It catalyses the reaction (6S)-NADHX + ATP = ADP + phosphate + NADH + H(+). The enzyme catalyses (6S)-NADPHX + ATP = ADP + phosphate + NADPH + H(+). In terms of biological role, catalyzes the dehydration of the S-form of NAD(P)HX at the expense of ATP, which is converted to ADP. Together with NAD(P)HX epimerase, which catalyzes the epimerization of the S- and R-forms, the enzyme allows the repair of both epimers of NAD(P)HX, a damaged form of NAD(P)H that is a result of enzymatic or heat-dependent hydration. This chain is ATP-dependent (S)-NAD(P)H-hydrate dehydratase, found in Vitis vinifera (Grape).